We begin with the raw amino-acid sequence, 310 residues long: MPVPTTLLQSDLPGLPLRHRGKVRDVFDIPRERLPAGTPPGEYLLMVATDRLSAFDVVLPDPIPGKGEMLCQVSNFWFAKTAHLMPNHLTGIDVASVLPEGVDPALYARRAVVTRKLKPVPVEAIARGYLIGSGWKDYQRTGKVSGIDLPDGLRQAEQLPEPIFTPSTKAAVGDHDENIDFDAMVKQVGAELAERVRDATLRIYKFAADYARERGIILADTKFEFGTDADGRLYIMDEMLTPDSSRYWPADEYEVGTSPPSYDKQFVRDYLETLDWGKTAPGPTIPAEIIERTRAKYAEALQRLAGISVD.

It belongs to the SAICAR synthetase family.

The catalysed reaction is 5-amino-1-(5-phospho-D-ribosyl)imidazole-4-carboxylate + L-aspartate + ATP = (2S)-2-[5-amino-1-(5-phospho-beta-D-ribosyl)imidazole-4-carboxamido]succinate + ADP + phosphate + 2 H(+). Its pathway is purine metabolism; IMP biosynthesis via de novo pathway; 5-amino-1-(5-phospho-D-ribosyl)imidazole-4-carboxamide from 5-amino-1-(5-phospho-D-ribosyl)imidazole-4-carboxylate: step 1/2. The chain is Phosphoribosylaminoimidazole-succinocarboxamide synthase from Stenotrophomonas maltophilia (strain K279a).